Consider the following 85-residue polypeptide: Progonadoliberin-2 (85 aa).

The signal sequence occupies residues 1–23 (MCVSRLVLLFGLLLCVGAQLSNA). Q24 carries the pyrrolidone carboxylic acid modification. G33 is subject to Glycine amide.

Belongs to the GnRH family.

The protein resides in the secreted. Functionally, stimulates the secretion of gonadotropins. The chain is Progonadoliberin-2 (gnrh2) from Morone saxatilis (Striped bass).